Reading from the N-terminus, the 179-residue chain is Large ribosomal subunit protein uL6 (179 aa).

The protein belongs to the universal ribosomal protein uL6 family. As to quaternary structure, part of the 50S ribosomal subunit.

In terms of biological role, this protein binds to the 23S rRNA, and is important in its secondary structure. It is located near the subunit interface in the base of the L7/L12 stalk, and near the tRNA binding site of the peptidyltransferase center. The sequence is that of Large ribosomal subunit protein uL6 from Persephonella marina (strain DSM 14350 / EX-H1).